A 349-amino-acid chain; its full sequence is GDSL esterase/lipase At1g58525 (349 aa).

The signal sequence occupies residues 1 to 19 (MKLQILLLALVLIAVEANA). A glycan (N-linked (GlcNAc...) asparagine) is linked at Asn-25. Ser-37 (nucleophile) is an active-site residue. An N-linked (GlcNAc...) asparagine glycan is attached at Asn-316. Active-site residues include Asp-324 and His-327.

Belongs to the 'GDSL' lipolytic enzyme family.

It is found in the secreted. The chain is GDSL esterase/lipase At1g58525 from Arabidopsis thaliana (Mouse-ear cress).